The following is a 103-amino-acid chain: Co-chaperonin GroES (103 aa).

The protein belongs to the GroES chaperonin family. Heptamer of 7 subunits arranged in a ring. Interacts with the chaperonin GroEL.

The protein localises to the cytoplasm. In terms of biological role, together with the chaperonin GroEL, plays an essential role in assisting protein folding. The GroEL-GroES system forms a nano-cage that allows encapsulation of the non-native substrate proteins and provides a physical environment optimized to promote and accelerate protein folding. GroES binds to the apical surface of the GroEL ring, thereby capping the opening of the GroEL channel. The chain is Co-chaperonin GroES from Picosynechococcus sp. (strain ATCC 27264 / PCC 7002 / PR-6) (Agmenellum quadruplicatum).